Reading from the N-terminus, the 512-residue chain is Phosphotransferase UL97 homolog (512 aa).

The active-site Proton acceptor is Asp-274.

Belongs to the protein kinase superfamily. Tyr protein kinase family.

The enzyme catalyses L-tyrosyl-[protein] + ATP = O-phospho-L-tyrosyl-[protein] + ADP + H(+). In Elephantid herpesvirus 1 (isolate Asian elephant/Berlin/Kiba/1998) (EIHV-1), this protein is Phosphotransferase UL97 homolog.